The following is a 65-amino-acid chain: Large ribosomal subunit protein bL35 (65 aa).

The protein belongs to the bacterial ribosomal protein bL35 family.

This is Large ribosomal subunit protein bL35 from Clostridium acetobutylicum (strain ATCC 824 / DSM 792 / JCM 1419 / IAM 19013 / LMG 5710 / NBRC 13948 / NRRL B-527 / VKM B-1787 / 2291 / W).